The primary structure comprises 443 residues: Probable serine transporter (443 aa).

Residues 1 to 48 lie on the Cytoplasmic side of the membrane; the sequence is MEIASNKGVIADASTPAGRAGMSESEWREAIKFDSTDTGWVIMSIGMA. The chain crosses the membrane as a helical span at residues 49-69; it reads IGAGIVFLPVQVGLMGLWVFL. Topologically, residues 70-110 are periplasmic; sequence LSSVIGYPAMYLFQRLFINTLAESPECKDYPSVISGYLGKN. The chain crosses the membrane as a helical span at residues 111–131; the sequence is WGILLGALYFVMLVIWMFVYS. Residues 132-149 lie on the Cytoplasmic side of the membrane; that stretch reads TAITNDSASYLHTFGVTE. Residues 150 to 170 form a helical membrane-spanning segment; it reads GLLSDSPFYGLVLICILVAIS. Topologically, residues 171–182 are periplasmic; sequence SRGEKLLFKIST. The chain crosses the membrane as a helical span at residues 183–203; sequence GMVLTKLLVVAALGVSMVGMW. The Cytoplasmic portion of the chain corresponds to 204–214; that stretch reads HLYNVGSLPPL. Residues 215-235 traverse the membrane as a helical segment; it reads GLLVKNAIITLPFTLTSILFI. Over 236–264 the chain is Periplasmic; sequence QTLSPMVISYRSREKSIEVARHKALRAMN. A helical membrane pass occupies residues 265-285; sequence IAFGILFVTVFFYAVSFTLAM. At 286-297 the chain is on the cytoplasmic side; the sequence is GHDEAVKAYEQN. 2 helical membrane-spanning segments follow: residues 298-318 and 319-339; these read ISALAIAAQFISGDGAAWVKV and VSVILNIFAVMTAFFGVYLGF. Topologically, residues 340-367 are cytoplasmic; that stretch reads REATQGIVMNILRRKMPAEKINENLVQR. Residues 368 to 388 traverse the membrane as a helical segment; it reads GIMIFAILLAWSAIVLNAPVL. A topological domain (periplasmic) is located at residue Ser389. The chain crosses the membrane as a helical span at residues 390–410; the sequence is FTSICSPIFGMVGCLIPAWLV. The Cytoplasmic segment spans residues 411-421; it reads YKVPALHKYKG. The chain crosses the membrane as a helical span at residues 422 to 442; that stretch reads MSLYLIIVTGLLLCVSPFLAF. Residue Ser443 is a topological domain, periplasmic.

The protein belongs to the amino acid/polyamine transporter 2 family. SdaC/TdcC subfamily.

It is found in the cell inner membrane. Its function is as follows. Plays a role in L-cysteine detoxification. May transport both D- and L-serine. The protein is Probable serine transporter (dlsT) of Escherichia coli (strain K12).